Reading from the N-terminus, the 5098-residue chain is Malformin synthetase mlfA (5098 aa).

The adenylation 1 stretch occupies residues 225 to 616; the sequence is ERHAANRPHS…CGRADTQVKL (392 aa). The Carrier 1 domain maps to 756–829; it reads SRLEQEIQLA…EAASLAKVQE (74 aa). An O-(pantetheine 4'-phosphoryl)serine modification is found at S790. The condensation 1 stretch occupies residues 867–1298; it reads EDVFPCTTMQ…ALDSLTLLQA (432 aa). The adenylation 2 stretch occupies residues 1326 to 1715; it reads DGWVTRQPES…GRKDTQVKLR (390 aa). One can recognise a Carrier 2 domain in the interval 1853-1930; that stretch reads TAASELERTL…QLAAEFGEPA (78 aa). S1890 carries the post-translational modification O-(pantetheine 4'-phosphoryl)serine. Disordered stretches follow at residues 1930-1960 and 1993-2022; these read AGQS…DGVD and GSSS…RVVS. Composition is skewed to low complexity over residues 1933–1957 and 1993–2011; these read SASS…STND and GSSS…SSSS. Residues 2063-2478 are condensation 2; that stretch reads EDIYPATALQ…ALSHSDRQTL (416 aa). Positions 2501 to 2893 are adenylation 3; sequence VRTPHAPAVC…IGRRDGQLKL (393 aa). The region spanning 3029–3105 is the Carrier 3 domain; it reads RPVTAQEREM…QLMRHLSATR (77 aa). S3066 carries the post-translational modification O-(pantetheine 4'-phosphoryl)serine. 2 condensation regions span residues 3122-3587 and 3608-4027; these read WVAL…TYDQ and NIYP…EQLM. Positions 4052 to 4442 are adenylation 4; that stretch reads HASREAVCAW…VGRKDNQIKF (391 aa). One can recognise a Carrier 4 domain in the interval 4576–4652; that stretch reads MPSTAAERKM…DLAYRTTNLV (77 aa). S4613 is modified (O-(pantetheine 4'-phosphoryl)serine). The interval 4689–5016 is condensation 5; it reads DVLPTTSFQR…LQTIVQHQNN (328 aa).

It belongs to the NRP synthetase family.

It functions in the pathway secondary metabolite biosynthesis. Functionally, nonribosomal peptide synthetase; part of the gene cluster that mediates the biosynthesis of malformins, cyclic pentapeptides with a disulfide bond between 2 consecutive cysteins, that show potential anti-tumor as well as antimalarial and antitrypanosomal properties. The nonribosomal peptide synthetase mlfA is responsible of the formation of the cyclic pentapeptide. The malformin biosynthesis clusters in malformin-producing fungi also contain enzymes involved in the formation of the disulfide bond between the two consecutive cysteins within malformins, in addition to additional tailoring enzymes such as methyltransferases or oxidoreductases. They are also composed of up to 4 major facilitator superfamily transporters, and transcription factors probably involved in the regulation of the expression of those clusters. The sequence is that of Malformin synthetase mlfA from Aspergillus homomorphus (strain CBS 101889).